We begin with the raw amino-acid sequence, 704 residues long: Myb-related protein B (704 aa).

HTH myb-type domains follow at residues 26–77 (RDNR…LRVL), 78–133 (NPDL…NPEV), and 134–184 (KKSC…KRKV). A DNA-binding region (H-T-H motif) is located at residues 54 to 77 (WKFLASHFPNRTDQQCQYRWLRVL). Lys-104 participates in a covalent cross-link: Glycyl lysine isopeptide (Lys-Gly) (interchain with G-Cter in SUMO2). DNA-binding regions (H-T-H motif) lie at residues 106–129 (WTLIAKHLKGRLGKQCRERWHNHL) and 157–180 (WAEIAKMLPGRTDNAVKNHWNSTI). A Glycyl lysine isopeptide (Lys-Gly) (interchain with G-Cter in SUMO2) cross-link involves residue Lys-197. Phosphothreonine is present on Thr-267. A Glycyl lysine isopeptide (Lys-Gly) (interchain with G-Cter in SUMO2) cross-link involves residue Lys-275. Residue Ser-282 is modified to Phosphoserine. The interval 325-412 (LSKFDLPEEP…GSGIGTPPSV (88 aa)) is disordered. Residues 339–366 (SVVSSPVQPQTSQQQQEEALQSSQQAAT) show a composition bias toward low complexity. Ser-396 is modified (phosphoserine). Lys-414 is covalently cross-linked (Glycyl lysine isopeptide (Lys-Gly) (interchain with G-Cter in SUMO2)). A phosphothreonine; by CDK2 mark is found at Thr-443 and Thr-447. Glycyl lysine isopeptide (Lys-Gly) (interchain with G-Cter in SUMO2) cross-links involve residues Lys-450 and Lys-485. Thr-490 and Thr-497 each carry phosphothreonine; by CDK2. Glycyl lysine isopeptide (Lys-Gly) (interchain with G-Cter in SUMO2) cross-links involve residues Lys-502 and Lys-513. Thr-524 is subject to Phosphothreonine; by CDK2. Residues Lys-527, Lys-537, and Lys-550 each participate in a glycyl lysine isopeptide (Lys-Gly) (interchain with G-Cter in SUMO2) cross-link. Ser-581 carries the phosphoserine; by CDK2 modification. Residues Lys-588 and Lys-600 each participate in a glycyl lysine isopeptide (Lys-Gly) (interchain with G-Cter in SUMO2) cross-link. The segment at 603 to 626 (SSTMPKPLSLPTSVTPSSCGFTSP) is disordered. Residues 607–620 (PKPLSLPTSVTPSS) are compositionally biased toward low complexity. Residues Lys-629, Lys-643, and Lys-652 each participate in a glycyl lysine isopeptide (Lys-Gly) (interchain with G-Cter in SUMO2) cross-link.

In terms of assembly, component of the DREAM complex (also named LINC complex) at least composed of E2F4, E2F5, LIN9, LIN37, LIN52, LIN54, MYBL1, MYBL2, RBL1, RBL2, RBBP4, TFDP1 and TFDP2. The complex exists in quiescent cells where it represses cell cycle-dependent genes. It dissociates in S phase when LIN9, LIN37, LIN52 and LIN54 form a subcomplex that binds to MYBL2. Interacts with CCNF (via the Cyclin N-terminal domain). Phosphorylated by cyclin A/CDK2 during S-phase. Phosphorylation at Thr-524 is probably involved in transcriptional activity.

The protein resides in the nucleus. In terms of biological role, transcription factor involved in the regulation of cell survival, proliferation, and differentiation. Transactivates the expression of the CLU gene. This is Myb-related protein B (Mybl2) from Mus musculus (Mouse).